The following is a 333-amino-acid chain: Foldase protein PrsA (333 aa).

The signal sequence occupies residues 1-19 (MKKRHLLIAGLACMTILGA). Cysteine 20 is lipidated: N-palmitoyl cysteine. The S-diacylglycerol cysteine moiety is linked to residue cysteine 20. In terms of domain architecture, PpiC spans 155–245 (LIEVEASHIL…YGYHIILVTD (91 aa)). The tract at residues 291–333 (GLFDLPDAPPVEDTPEIDGEDASDEAEDQAEDADENAEEEDES) is disordered. Over residues 303–333 (DTPEIDGEDASDEAEDQAEDADENAEEEDES) the composition is skewed to acidic residues.

Belongs to the PrsA family.

It localises to the cell membrane. The enzyme catalyses [protein]-peptidylproline (omega=180) = [protein]-peptidylproline (omega=0). In terms of biological role, plays a major role in protein secretion by helping the post-translocational extracellular folding of several secreted proteins. This Halalkalibacterium halodurans (strain ATCC BAA-125 / DSM 18197 / FERM 7344 / JCM 9153 / C-125) (Bacillus halodurans) protein is Foldase protein PrsA.